The following is a 1060-amino-acid chain: Centrosomal protein of 131 kDa (1060 aa).

Residues 1–11 (MKGSRTITATP) show a composition bias toward polar residues. Positions 1–96 (MKGSRTITAT…TGSPRPAEPT (96 aa)) are disordered. The tract at residues 1–244 (MKGSRTITAT…SQSARGTTGL (244 aa)) is interaction with PLK4. Phosphoserine is present on residues Ser-14 and Ser-35. Polar residues-rich tracts occupy residues 32–50 (RPGS…SVAT) and 73–88 (LRRS…SWTG). The residue at position 47 (Ser-47) is a Phosphoserine; by MAPKAPK2. Ser-78 is subject to Phosphoserine; by MAPKAPK2 and PLK4. Residues Ser-89, Ser-105, Ser-114, Ser-146, and Ser-150 each carry the phosphoserine modification. Disordered regions lie at residues 136–155 (LALP…LGPR) and 217–248 (EGGE…LRRR). The segment covering 217–226 (EGGEGSDLGK) has biased composition (basic and acidic residues). The 21-residue stretch at 263 to 283 (NQAAVTIQRWYRCQVQRRRAG) folds into the IQ domain. 2 stretches are compositionally biased toward basic and acidic residues: residues 314–327 (EEAA…EKAR) and 344–363 (KASE…RAPE). Residues 314–437 (EEAARKKARE…VSGSSRGKAR (124 aa)) form a disordered region. The segment covering 398-408 (ASESSPEQWQS) has biased composition (low complexity). Over residues 409-424 (PEDKPQDIHSQGEARQ) the composition is skewed to basic and acidic residues. Thr-473 is subject to Phosphothreonine. The residue at position 481 (Ser-481) is a Phosphoserine.

It belongs to the CEP131 family. Self-associates. Associates with the centriolar satellite BBSome protein complex Interacts with BBS4; the interaction limits BBS4 availability for association with the BBSome complex, and hence negatively regulates ciliary localization of the BBSome complex. Interacts with MIB1. Interacts with PCM1; the interaction increases in response to ultraviolet light (UV) radiation. Associates with microtubule; association to microtubule is reduced in response to cellular stress, such as UV stimulation, in a process that requires p38 MAP kinase signaling. Interacts with CEP290, DCTN1, MAP1LC3B, PCNT, PCM1 and CEP152. Interacts with 14-3-3 proteins following UV-induced phosphorylation by MAPKAPK2; this inhibits formation of novel centriolar satellites. Interacts with SDCCAG8. Interacts with CCDC61. Interacts with PLK4. Post-translationally, ubiquitinated. Undergoes monoubiquitination catalyzed by the E3 ubiquitin-protein ligase MIB1 in proliferating cells, preventing cilia formation. Monoubiquitination by MIB1 is inhibited in response to cellular stress, such as ultraviolet light (UV) radiation or heat shock, resulting in ciliogenesis restoration. In terms of processing, MAPKAPK2-dependent phosphorylation at Ser-47 and Ser-78 occurs in response to cellular stress such as exposure to ultraviolet irradiation and promotes binding to 14-3-3 proteins which leads to cytoplasmic sequestration of CEP131 and blocks formation of new centriolar satellites. Phosphorylation at Ser-78 mediated by PLK4 is essential for proper organization and integrity of centriolar satellites but is dispensable for its localization to centrioles and its function in ciliogenesis. In terms of tissue distribution, localized to the pre-acrosome region of round and elongated spermatids in testis but also present in ovary, brain and adipose tissue.

Its subcellular location is the cytoplasm. It is found in the cytoskeleton. The protein localises to the microtubule organizing center. The protein resides in the centrosome. It localises to the centriolar satellite. Its subcellular location is the centriole. It is found in the cilium basal body. The protein localises to the cytoplasmic vesicle. The protein resides in the secretory vesicle. It localises to the acrosome. In terms of biological role, component of centriolar satellites contributing to the building of a complex and dynamic network required to regulate cilia/flagellum formation. In proliferating cells, MIB1-mediated ubiquitination induces its sequestration within centriolar satellites, precluding untimely cilia formation initiation. In contrast, during normal and ultraviolet or heat shock cellular stress-induced ciliogenesis, its non-ubiquitinated form is rapidly displaced from centriolar satellites and recruited to centrosome/basal bodies in a microtubule- and p38 MAPK-dependent manner. Also acts as a negative regulator of BBSome ciliary trafficking. Plays a role in sperm flagellar formation; may be involved in the regulation of intraflagellar transport (IFT) and/or intramanchette (IMT) trafficking, which are important for axoneme extension and/or cargo delivery to the nascent sperm tail. Required for optimal cell proliferation and cell cycle progression; may play a role in the regulation of genome stability and centriole duplication in non-ciliogenic cells. Involved in centriole duplication. Required for CEP152, WDR62 and CEP63 centrosomal localization and promotes the centrosomal localization of CDK2. Essential for maintaining proper centriolar satellite integrity. The polypeptide is Centrosomal protein of 131 kDa (Cep131) (Mus musculus (Mouse)).